The chain runs to 872 residues: Alanine--tRNA ligase (872 aa).

Residues H567, H571, C669, and H673 each contribute to the Zn(2+) site.

The protein belongs to the class-II aminoacyl-tRNA synthetase family. Zn(2+) serves as cofactor.

The protein localises to the cytoplasm. The catalysed reaction is tRNA(Ala) + L-alanine + ATP = L-alanyl-tRNA(Ala) + AMP + diphosphate. Functionally, catalyzes the attachment of alanine to tRNA(Ala) in a two-step reaction: alanine is first activated by ATP to form Ala-AMP and then transferred to the acceptor end of tRNA(Ala). Also edits incorrectly charged Ser-tRNA(Ala) and Gly-tRNA(Ala) via its editing domain. This Streptococcus pyogenes serotype M28 (strain MGAS6180) protein is Alanine--tRNA ligase.